Reading from the N-terminus, the 128-residue chain is Iron-sulfur cluster insertion protein ErpA (128 aa).

Positions 56, 120, and 122 each coordinate iron-sulfur cluster.

Belongs to the HesB/IscA family. As to quaternary structure, homodimer. Iron-sulfur cluster is required as a cofactor.

Functionally, required for insertion of 4Fe-4S clusters for at least IspG. The sequence is that of Iron-sulfur cluster insertion protein ErpA from Xylella fastidiosa (strain M23).